Consider the following 249-residue polypeptide: Probable phosphatase VV2_1469 (249 aa).

Zn(2+) contacts are provided by H8, H10, H16, H41, E74, H102, H132, D194, and H196.

This sequence belongs to the PHP family. Zn(2+) serves as cofactor.

The polypeptide is Probable phosphatase VV2_1469 (Vibrio vulnificus (strain CMCP6)).